The sequence spans 364 residues: Chorismate synthase (364 aa).

Residues arginine 48 and arginine 54 each contribute to the NADP(+) site. FMN contacts are provided by residues 125–127, 238–239, glycine 278, 293–297, and arginine 319; these read RSS, NA, and KPTSS.

The protein belongs to the chorismate synthase family. In terms of assembly, homotetramer. It depends on FMNH2 as a cofactor.

It carries out the reaction 5-O-(1-carboxyvinyl)-3-phosphoshikimate = chorismate + phosphate. It participates in metabolic intermediate biosynthesis; chorismate biosynthesis; chorismate from D-erythrose 4-phosphate and phosphoenolpyruvate: step 7/7. Its function is as follows. Catalyzes the anti-1,4-elimination of the C-3 phosphate and the C-6 proR hydrogen from 5-enolpyruvylshikimate-3-phosphate (EPSP) to yield chorismate, which is the branch point compound that serves as the starting substrate for the three terminal pathways of aromatic amino acid biosynthesis. This reaction introduces a second double bond into the aromatic ring system. In Marinobacter nauticus (strain ATCC 700491 / DSM 11845 / VT8) (Marinobacter aquaeolei), this protein is Chorismate synthase.